Reading from the N-terminus, the 182-residue chain is MTEEHVVLLDEQDKPSGTLEKYAAHTLNTPLHLAFSCWLFNEDGQLLVTRRSLSKKAWPGVWTNSVCGHPQQGEAIEEAIIRRCRFELGVEITDLTPIYPHFSYRAIDPNGIVENEVCPVFAARATSVLQVNNEEVMDCQWSVLEDVLRGISATPWAFSPWMVMQASDDNARELLSEFANGN.

Mn(2+) contacts are provided by H25 and H32. Residues 30 to 164 (PLHLAFSCWL…PWAFSPWMVM (135 aa)) enclose the Nudix hydrolase domain. C67 is an active-site residue. H69 is a Mn(2+) binding site. E87 lines the Mg(2+) pocket. Residues E114 and E116 each contribute to the Mn(2+) site. E116 is an active-site residue.

This sequence belongs to the IPP isomerase type 1 family. In terms of assembly, homodimer. Requires Mg(2+) as cofactor. Mn(2+) serves as cofactor.

It localises to the cytoplasm. The enzyme catalyses isopentenyl diphosphate = dimethylallyl diphosphate. It functions in the pathway isoprenoid biosynthesis; dimethylallyl diphosphate biosynthesis; dimethylallyl diphosphate from isopentenyl diphosphate: step 1/1. Functionally, catalyzes the 1,3-allylic rearrangement of the homoallylic substrate isopentenyl (IPP) to its highly electrophilic allylic isomer, dimethylallyl diphosphate (DMAPP). This chain is Isopentenyl-diphosphate Delta-isomerase, found in Salmonella arizonae (strain ATCC BAA-731 / CDC346-86 / RSK2980).